We begin with the raw amino-acid sequence, 770 residues long: Molybdenum cofactor sulfurase (770 aa).

Lysine 231 is subject to N6-(pyridoxal phosphate)lysine. The active site involves cysteine 395. Residues 601–770 enclose the MOSC domain; sequence DWVSRALGVS…TVSGVIEESE (170 aa).

It belongs to the class-V pyridoxal-phosphate-dependent aminotransferase family. MOCOS subfamily. It depends on pyridoxal 5'-phosphate as a cofactor.

It carries out the reaction Mo-molybdopterin + L-cysteine + AH2 = thio-Mo-molybdopterin + L-alanine + A + H2O. Sulfurates the molybdenum cofactor. Sulfation of molybdenum is essential for xanthine dehydrogenase (XDH) and aldehyde oxidase (ADO) enzymes in which molybdenum cofactor is liganded by 1 oxygen and 1 sulfur atom in active form. The sequence is that of Molybdenum cofactor sulfurase from Anopheles gambiae (African malaria mosquito).